A 256-amino-acid chain; its full sequence is Imidazole glycerol phosphate synthase subunit hisF1 (256 aa).

Active-site residues include Asp11 and Asp130.

It belongs to the HisA/HisF family. In terms of assembly, heterodimer of HisH and HisF.

It localises to the cytoplasm. It carries out the reaction 5-[(5-phospho-1-deoxy-D-ribulos-1-ylimino)methylamino]-1-(5-phospho-beta-D-ribosyl)imidazole-4-carboxamide + L-glutamine = D-erythro-1-(imidazol-4-yl)glycerol 3-phosphate + 5-amino-1-(5-phospho-beta-D-ribosyl)imidazole-4-carboxamide + L-glutamate + H(+). Its pathway is amino-acid biosynthesis; L-histidine biosynthesis; L-histidine from 5-phospho-alpha-D-ribose 1-diphosphate: step 5/9. Its function is as follows. IGPS catalyzes the conversion of PRFAR and glutamine to IGP, AICAR and glutamate. The HisF subunit catalyzes the cyclization activity that produces IGP and AICAR from PRFAR using the ammonia provided by the HisH subunit. The protein is Imidazole glycerol phosphate synthase subunit hisF1 (hisF1) of Parasynechococcus marenigrum (strain WH8102).